Here is a 217-residue protein sequence, read N- to C-terminus: Probable GTP-binding protein EngB (217 aa).

The region spanning 24–207 (SQPEICFAGR…HALIESWLIP (184 aa)) is the EngB-type G domain. GTP-binding positions include 32–39 (GRSNAGKS), 59–63 (GRTQH), 81–84 (DLPG), 148–151 (TKCD), and 185–188 (LFSA). Residues serine 39 and threonine 61 each contribute to the Mg(2+) site.

The protein belongs to the TRAFAC class TrmE-Era-EngA-EngB-Septin-like GTPase superfamily. EngB GTPase family. Mg(2+) serves as cofactor.

In terms of biological role, necessary for normal cell division and for the maintenance of normal septation. This chain is Probable GTP-binding protein EngB, found in Paraburkholderia xenovorans (strain LB400).